Here is a 305-residue protein sequence, read N- to C-terminus: NAD kinase (305 aa).

D88 functions as the Proton acceptor in the catalytic mechanism. Residues 88-89, R93, 162-163, K173, N192, 203-208, and Q262 each bind NAD(+); these read DG, NE, and TAYSFS.

The protein belongs to the NAD kinase family. Requires a divalent metal cation as cofactor.

The protein localises to the cytoplasm. It carries out the reaction NAD(+) + ATP = ADP + NADP(+) + H(+). Functionally, involved in the regulation of the intracellular balance of NAD and NADP, and is a key enzyme in the biosynthesis of NADP. Catalyzes specifically the phosphorylation on 2'-hydroxyl of the adenosine moiety of NAD to yield NADP. In Tropheryma whipplei (strain TW08/27) (Whipple's bacillus), this protein is NAD kinase.